Here is a 372-residue protein sequence, read N- to C-terminus: Envelope phospholipase OPG057 (372 aa).

Residues 153–156 carry the YPPL motif; it reads YPPL. 2 S-palmitoyl cysteine; by host lipidation sites follow: Cys185 and Cys186. The PLD phosphodiesterase domain maps to 307 to 334; sequence FTIQNNTKLLIVDDEYVHITSANFDGTH.

It belongs to the orthopoxvirus OPG057 family. Interacts with protein OPG190. Post-translationally, palmitoylated. Attachment of the palmitate moiety is essential for correct intracellular targeting and protein function.

It is found in the virion membrane. It localises to the host Golgi apparatus. The protein resides in the host trans-Golgi network. Its subcellular location is the host endoplasmic reticulum membrane. It catalyses the reaction a 1,2-diacyl-sn-glycero-3-phosphocholine + H2O = a 1,2-diacyl-sn-glycero-3-phosphate + choline + H(+). Its function is as follows. Major envelope protein that plays a role in the biogenesis of the viral double membrane and in egress of virus from the host cell. Produces the wrapped form of virus that is required for cell-to-cell spread. Acts as a lipase with broad specificity including phospholipase C, phospholipase A, and triacylglycerol lipase activities. This is Envelope phospholipase OPG057 (OPG057) from Vaccinia virus (strain Copenhagen) (VACV).